Reading from the N-terminus, the 382-residue chain is Mannitol-1-phosphate 5-dehydrogenase (382 aa).

NAD(+) is bound at residue 3–14 (ALHFGAGNIGRG). Lysine 269 is subject to N6-acetyllysine.

It belongs to the mannitol dehydrogenase family.

It carries out the reaction D-mannitol 1-phosphate + NAD(+) = beta-D-fructose 6-phosphate + NADH + H(+). The protein is Mannitol-1-phosphate 5-dehydrogenase of Escherichia coli O139:H28 (strain E24377A / ETEC).